A 483-amino-acid polypeptide reads, in one-letter code: Glycogen synthase kinase-3 alpha (483 aa).

The span at 1 to 15 (MSGGGPSGGGPGGSG) shows a compositional bias: gly residues. The disordered stretch occupies residues 1 to 96 (MSGGGPSGGG…PPPGVKLGRD (96 aa)). An N-acetylserine modification is found at S2. S2 carries the phosphoserine modification. S21 carries the phosphoserine; by PKB/AKT1 modification. Residues 25-82 (PGGGGGGGGGGPGGSASGPGGTGGGKASVGAMGGGVGASSSGGGPSGSGGGGSGGPGA) show a composition bias toward gly residues. Phosphoserine occurs at positions 72, 77, and 97. A Protein kinase domain is found at 119 to 403 (YTDIKVIGNG…PLEACAHSFF (285 aa)). Residues 125–133 (IGNGSFGVV) and K148 each bind ATP. The Proton acceptor role is filled by D244. The residue at position 279 (Y279) is a Phosphotyrosine. The tract at residues 443–483 (PHLRSPSGPATLTSSSQALTETQTGQDWQAPDATPTLTNSS) is disordered. Residues 450–469 (GPATLTSSSQALTETQTGQD) are compositionally biased toward polar residues.

This sequence belongs to the protein kinase superfamily. CMGC Ser/Thr protein kinase family. GSK-3 subfamily. Monomer. Interacts with ARRB2, AXIN1 and CTNNB1/beta-catenin. Interacts with CTNND2. Interacts with LMBR1L. Interacts with DDX3X. Interacts with TNFRSF10B. In terms of processing, phosphorylated by AKT1 at Ser-21: upon insulin-mediated signaling, the activated PKB/AKT1 protein kinase phosphorylates and deactivates GSK3A, resulting in the dephosphorylation and activation of GYS1. Activated by phosphorylation at Tyr-279.

The enzyme catalyses L-seryl-[tau protein] + ATP = O-phospho-L-seryl-[tau protein] + ADP + H(+). It catalyses the reaction L-threonyl-[tau protein] + ATP = O-phospho-L-threonyl-[tau protein] + ADP + H(+). It carries out the reaction L-seryl-[protein] + ATP = O-phospho-L-seryl-[protein] + ADP + H(+). The catalysed reaction is L-threonyl-[protein] + ATP = O-phospho-L-threonyl-[protein] + ADP + H(+). Activated by phosphorylation at Tyr-279. In response to insulin, inhibited by phosphorylation at Ser-21 by PKB/AKT1; phosphorylation at this site causes a conformational change, preventing access of substrates to the active site. Inhibited by lithium. Its function is as follows. Constitutively active protein kinase that acts as a negative regulator in the hormonal control of glucose homeostasis, Wnt signaling and regulation of transcription factors and microtubules, by phosphorylating and inactivating glycogen synthase (GYS1 or GYS2), CTNNB1/beta-catenin, APC and AXIN1. Requires primed phosphorylation of the majority of its substrates. Contributes to insulin regulation of glycogen synthesis by phosphorylating and inhibiting GYS1 activity and hence glycogen synthesis. Regulates glycogen metabolism in liver, but not in muscle. May also mediate the development of insulin resistance by regulating activation of transcription factors. In Wnt signaling, regulates the level and transcriptional activity of nuclear CTNNB1/beta-catenin. Facilitates amyloid precursor protein (APP) processing and the generation of APP-derived amyloid plaques found in Alzheimer disease. May be involved in the regulation of replication in pancreatic beta-cells. Is necessary for the establishment of neuronal polarity and axon outgrowth. Through phosphorylation of the anti-apoptotic protein MCL1, may control cell apoptosis in response to growth factors deprivation. Acts as a regulator of autophagy by mediating phosphorylation of KAT5/TIP60 under starvation conditions, activating KAT5/TIP60 acetyltransferase activity and promoting acetylation of key autophagy regulators, such as ULK1 and RUBCNL/Pacer. Negatively regulates extrinsic apoptotic signaling pathway via death domain receptors. Promotes the formation of an anti-apoptotic complex, made of DDX3X, BRIC2 and GSK3B, at death receptors, including TNFRSF10B. The anti-apoptotic function is most effective with weak apoptotic signals and can be overcome by stronger stimulation. The polypeptide is Glycogen synthase kinase-3 alpha (Gsk3a) (Rattus norvegicus (Rat)).